Reading from the N-terminus, the 87-residue chain is MNLFNFFTRSRSTAPVARERLQLLLAHERALSGQSDLAVVLQEEILAVIAKHVSIDREKVNVKLGRDGTVSTLEIDIEMPEAALVKN.

Belongs to the MinE family.

In terms of biological role, prevents the cell division inhibition by proteins MinC and MinD at internal division sites while permitting inhibition at polar sites. This ensures cell division at the proper site by restricting the formation of a division septum at the midpoint of the long axis of the cell. The protein is Cell division topological specificity factor of Acidiphilium cryptum (strain JF-5).